Here is a 340-residue protein sequence, read N- to C-terminus: DNA-directed RNA polymerase subunit alpha (340 aa).

Residues 1 to 233 (MYKNWRDLIR…EQLSIFINFD (233 aa)) are alpha N-terminal domain (alpha-NTD). An alpha C-terminal domain (alpha-CTD) region spans residues 246–340 (DEIDKINENL…RLRGEQNEEE (95 aa)).

Belongs to the RNA polymerase alpha chain family. Homodimer. The RNAP catalytic core consists of 2 alpha, 1 beta, 1 beta' and 1 omega subunit. When a sigma factor is associated with the core the holoenzyme is formed, which can initiate transcription.

It catalyses the reaction RNA(n) + a ribonucleoside 5'-triphosphate = RNA(n+1) + diphosphate. DNA-dependent RNA polymerase catalyzes the transcription of DNA into RNA using the four ribonucleoside triphosphates as substrates. This chain is DNA-directed RNA polymerase subunit alpha, found in Pelobacter propionicus (strain DSM 2379 / NBRC 103807 / OttBd1).